A 321-amino-acid chain; its full sequence is Glutamyl-Q tRNA(Asp) synthetase (321 aa).

L-glutamate contacts are provided by residues 25 to 29 and glutamate 61; that span reads RFAPS. A 'HIGH' region motif is present at residues 28–38; it reads PSPSGDLHFGS. Zn(2+) contacts are provided by cysteine 117, cysteine 119, tyrosine 131, and cysteine 135. L-glutamate-binding residues include tyrosine 188 and arginine 206. Positions 244 to 248 match the 'KMSKS' region motif; sequence KLSKQ. Residue lysine 247 participates in ATP binding.

The protein belongs to the class-I aminoacyl-tRNA synthetase family. GluQ subfamily. The cofactor is Zn(2+).

Catalyzes the tRNA-independent activation of glutamate in presence of ATP and the subsequent transfer of glutamate onto a tRNA(Asp). Glutamate is transferred on the 2-amino-5-(4,5-dihydroxy-2-cyclopenten-1-yl) moiety of the queuosine in the wobble position of the QUC anticodon. The protein is Glutamyl-Q tRNA(Asp) synthetase of Yersinia pestis.